Reading from the N-terminus, the 297-residue chain is UTP--glucose-1-phosphate uridylyltransferase YngB (297 aa).

The first 27 residues, 1-27 (MRKKVRKAVIPAAGLGTRFLPATKAQP), serve as a signal peptide directing secretion.

Belongs to the UDPGP type 2 family. Homodimer.

It carries out the reaction alpha-D-glucose 1-phosphate + UTP + H(+) = UDP-alpha-D-glucose + diphosphate. It functions in the pathway glycolipid metabolism; diglucosyl-diacylglycerol biosynthesis. In terms of biological role, catalyzes the formation of UDP-glucose from glucose-1-phosphate and UTP. This is an intermediate step in the biosynthesis of diglucosyl-diacylglycerol (Glc2-DAG), i.e. the predominant glycolipid found in B.subtilis membrane, which is also used as a membrane anchor for lipoteichoic acid (LTA). YngB contributes to wall teichoic acid (WTA) glucosylation and glycolipid formation under anaerobic fermentative growth conditions. Might also enter other glycosylation pathways, leading to the decorating of other cell envelope components with glucose residues under anaerobic or other growth conditions. The sequence is that of UTP--glucose-1-phosphate uridylyltransferase YngB (yngB) from Bacillus subtilis (strain 168).